The primary structure comprises 337 residues: tRNA N6-adenosine threonylcarbamoyltransferase (337 aa).

Residues H111 and H115 each coordinate Fe cation. Substrate contacts are provided by residues 134 to 138 (LVSGG), D167, G180, and N272. D300 lines the Fe cation pocket.

This sequence belongs to the KAE1 / TsaD family. Fe(2+) is required as a cofactor.

Its subcellular location is the cytoplasm. It catalyses the reaction L-threonylcarbamoyladenylate + adenosine(37) in tRNA = N(6)-L-threonylcarbamoyladenosine(37) in tRNA + AMP + H(+). In terms of biological role, required for the formation of a threonylcarbamoyl group on adenosine at position 37 (t(6)A37) in tRNAs that read codons beginning with adenine. Is involved in the transfer of the threonylcarbamoyl moiety of threonylcarbamoyl-AMP (TC-AMP) to the N6 group of A37, together with TsaE and TsaB. TsaD likely plays a direct catalytic role in this reaction. This is tRNA N6-adenosine threonylcarbamoyltransferase from Shewanella amazonensis (strain ATCC BAA-1098 / SB2B).